Here is a 1412-residue protein sequence, read N- to C-terminus: DNA-directed RNA polymerase subunit beta' (1412 aa).

Zn(2+) is bound by residues Cys-70, Cys-72, Cys-85, and Cys-88. Mg(2+)-binding residues include Asp-458, Asp-460, and Asp-462. Zn(2+) contacts are provided by Cys-813, Cys-887, Cys-894, and Cys-897. Residues 1388-1412 (EQALLTPATTAEAVVGEEPAPPPAQ) form a disordered region. Low complexity predominate over residues 1393–1405 (TPATTAEAVVGEE).

Belongs to the RNA polymerase beta' chain family. In terms of assembly, the RNAP catalytic core consists of 2 alpha, 1 beta, 1 beta' and 1 omega subunit. When a sigma factor is associated with the core the holoenzyme is formed, which can initiate transcription. Requires Mg(2+) as cofactor. The cofactor is Zn(2+).

It carries out the reaction RNA(n) + a ribonucleoside 5'-triphosphate = RNA(n+1) + diphosphate. DNA-dependent RNA polymerase catalyzes the transcription of DNA into RNA using the four ribonucleoside triphosphates as substrates. This chain is DNA-directed RNA polymerase subunit beta', found in Methylibium petroleiphilum (strain ATCC BAA-1232 / LMG 22953 / PM1).